We begin with the raw amino-acid sequence, 148 residues long: Prefoldin subunit 2 (148 aa).

The stretch at 87–114 (KDGLEEVVRKLYETLEKKKKDLTEFEAK) forms a coiled coil. The segment covering 122–134 (QEDNKEGGNKKEG) has biased composition (basic and acidic residues). The segment at 122–148 (QEDNKEGGNKKEGNAQGVLVGAASSSQ) is disordered.

It belongs to the prefoldin subunit beta family. Heterohexamer of two PFD-alpha type and four PFD-beta type subunits forming prefoldin co-chaperone complex. Interacts with LSM8, a specific subunit of the LSM2-8 complex, which is a core component of the spliceosome.

Its subcellular location is the cytoplasm. It is found in the nucleus. In terms of biological role, binds specifically to cytosolic chaperonin (c-CPN) and transfers target proteins to it. Binds to nascent polypeptide chain and promotes folding in an environment in which there are many competing pathways for nonnative proteins. Together with other chaperonins, contribute to the regulation of gene expression by modulating the spliceosome function on pre-mRNA splicing post-transcriptionally by acting as a co-chaperone of Hsp90 to control levels of LSM8. Required for microtubules (MTs) organization and dynamicity. Involved in the process leading to microtubules dissociation in response to gibberellic acid (GA) probably due to the DELLA proteins-mediated translocation of the prefoldin co-chaperone complex from the cytoplasm to the nucleus. This is Prefoldin subunit 2 from Arabidopsis thaliana (Mouse-ear cress).